Consider the following 920-residue polypeptide: MASSRAQRFNPIAFTPWPVTCITTIVYLALLIPILVINLVVPSAPETNPKGVNLTEAWRDLQHLTGGFHPYNSRRNDEVHEWLLSRINSIIRPTVEAGQRSSATDNLPEVFVFDDNRSNLTYSNGGVGKTSIVGVYFESTNIIVYIRGSEDDSENWRERSNGKPKGKGGVLVNAHYDSVSTGYGATDDGIGVVSLLQLLRYFTTPGNNPRKGLVLLFNNGEEDYLNGAHVFSQHPLSNFTHTFLNLEDTEVTRFYGNTKHPFGSVLAADGFKMGLLRSQTDYVVFNGILGLRGLDLAFIAPRSRYHTDQDDTRHTSIDSLWHMLSASIGTTEGLVSYTGMDFDGKSKGQNKVNSGAGSLGVWFDMFGTAFAVFRLHTLFAISVALLVIAPLVIFITSVILSKTDRMYLFSMSKSLEGTGDQVSLRGLRGFSRTPIILVIATTIPICLAYLLEKVNPYIVHSSQFSVWSMMFSAWIFLAWFLACAADFFRPSALHRAYSYTWIFVATWIMLVINTVYANQKGIAAGYFLLFYFAGAFLATWISYLELFALPRKGDFARQTTGRRPSSLSSRLLTSSADELRSNASPSTAEFPGAAGEDTDPTESTSLLRGQRTTFANYRTSGPGGAAEETDEREDINKGGTFEHEQSWSWTLPRWTWVLQLLLLAPIVLILVGQLALFLTASMCQVGSDGVSTFVVYLACAVFTTLLCIPLFPLIHRFTYHIPTFLFLVFIGTLIYNLVAFPFSPANRLKTFFIQEVDLDNGSSTVSLTGIQPYLTEAINSIPSAAGQNITCDKTTPFGMLERCSWSGLSPNVLGQGRERDTEIVPDKWITYNITKTVGKNKARIEISGRNTRACKLKFDRAVANFQVSGSAVDHRMPPTSRQGPGVIPALDEVRLYAPSWIAISKAADGLVEASHSFTIQ.

Topologically, residues 1 to 20 are cytoplasmic; sequence MASSRAQRFNPIAFTPWPVT. A helical transmembrane segment spans residues 21-41; sequence CITTIVYLALLIPILVINLVV. The Vacuolar segment spans residues 42 to 378; the sequence is PSAPETNPKG…AFAVFRLHTL (337 aa). Residues Asn53, Asn116, and Asn119 are each glycosylated (N-linked (GlcNAc...) asparagine). Residues His175 and Asp187 each coordinate Zn(2+). Catalysis depends on Glu221, which acts as the Proton acceptor. A Zn(2+)-binding site is contributed by Glu222. N-linked (GlcNAc...) asparagine glycosylation is present at Asn238. 2 residues coordinate Zn(2+): Glu247 and His306. A helical membrane pass occupies residues 379-399; that stretch reads FAISVALLVIAPLVIFITSVI. Over 400–433 the chain is Cytoplasmic; that stretch reads LSKTDRMYLFSMSKSLEGTGDQVSLRGLRGFSRT. The chain crosses the membrane as a helical span at residues 434-454; that stretch reads PIILVIATTIPICLAYLLEKV. The Vacuolar portion of the chain corresponds to 455–463; sequence NPYIVHSSQ. Residues 464-484 form a helical membrane-spanning segment; it reads FSVWSMMFSAWIFLAWFLACA. Topologically, residues 485–495 are cytoplasmic; it reads ADFFRPSALHR. Residues 496-516 form a helical membrane-spanning segment; it reads AYSYTWIFVATWIMLVINTVY. The Vacuolar portion of the chain corresponds to 517–520; sequence ANQK. A helical transmembrane segment spans residues 521–541; it reads GIAAGYFLLFYFAGAFLATWI. Over 542–659 the chain is Cytoplasmic; that stretch reads SYLELFALPR…TLPRWTWVLQ (118 aa). The disordered stretch occupies residues 556-605; it reads ARQTTGRRPSSLSSRLLTSSADELRSNASPSTAEFPGAAGEDTDPTESTS. Residues 559–575 are compositionally biased toward low complexity; sequence TTGRRPSSLSSRLLTSS. A helical membrane pass occupies residues 660–680; it reads LLLLAPIVLILVGQLALFLTA. The Vacuolar segment spans residues 681–693; the sequence is SMCQVGSDGVSTF. Residues 694-714 traverse the membrane as a helical segment; sequence VVYLACAVFTTLLCIPLFPLI. Over 715–720 the chain is Cytoplasmic; that stretch reads HRFTYH. A helical transmembrane segment spans residues 721–741; the sequence is IPTFLFLVFIGTLIYNLVAFP. Residues 742–920 are Vacuolar-facing; that stretch reads FSPANRLKTF…VEASHSFTIQ (179 aa). Asn760, Asn788, and Asn832 each carry an N-linked (GlcNAc...) asparagine glycan.

This sequence belongs to the peptidase M28 family. Requires Zn(2+) as cofactor.

Its subcellular location is the vacuole membrane. Functionally, may be involved in vacuolar sorting and osmoregulation. The protein is Vacuolar membrane protease of Ajellomyces capsulatus (strain H143) (Darling's disease fungus).